Consider the following 205-residue polypeptide: Holliday junction branch migration complex subunit RuvA (205 aa).

A domain I region spans residues 1-64; sequence MIGRLRGIIL…EDAQLLFGFN (64 aa). Positions 65 to 142 are domain II; the sequence is DKQERALFRE…KGLSGDLFNP (78 aa). The segment at 143 to 156 is flexible linker; the sequence is VSDIPLASPASAES. A domain III region spans residues 157 to 205; it reads RASDPEAEAAAALVALGYKPQEASRMISKIARPEADCETLIRDALRAAL.

The protein belongs to the RuvA family. As to quaternary structure, homotetramer. Forms an RuvA(8)-RuvB(12)-Holliday junction (HJ) complex. HJ DNA is sandwiched between 2 RuvA tetramers; dsDNA enters through RuvA and exits via RuvB. An RuvB hexamer assembles on each DNA strand where it exits the tetramer. Each RuvB hexamer is contacted by two RuvA subunits (via domain III) on 2 adjacent RuvB subunits; this complex drives branch migration. In the full resolvosome a probable DNA-RuvA(4)-RuvB(12)-RuvC(2) complex forms which resolves the HJ.

It localises to the cytoplasm. Functionally, the RuvA-RuvB-RuvC complex processes Holliday junction (HJ) DNA during genetic recombination and DNA repair, while the RuvA-RuvB complex plays an important role in the rescue of blocked DNA replication forks via replication fork reversal (RFR). RuvA specifically binds to HJ cruciform DNA, conferring on it an open structure. The RuvB hexamer acts as an ATP-dependent pump, pulling dsDNA into and through the RuvAB complex. HJ branch migration allows RuvC to scan DNA until it finds its consensus sequence, where it cleaves and resolves the cruciform DNA. This chain is Holliday junction branch migration complex subunit RuvA, found in Pectobacterium carotovorum subsp. carotovorum (strain PC1).